The sequence spans 103 residues: Small ribosomal subunit protein uS10 (103 aa).

It belongs to the universal ribosomal protein uS10 family. In terms of assembly, part of the 30S ribosomal subunit.

In terms of biological role, involved in the binding of tRNA to the ribosomes. In Stutzerimonas stutzeri (strain A1501) (Pseudomonas stutzeri), this protein is Small ribosomal subunit protein uS10.